The chain runs to 135 residues: Transcription antitermination protein NusB (135 aa).

The protein belongs to the NusB family.

Involved in transcription antitermination. Required for transcription of ribosomal RNA (rRNA) genes. Binds specifically to the boxA antiterminator sequence of the ribosomal RNA (rrn) operons. This is Transcription antitermination protein NusB from Lacticaseibacillus paracasei (strain ATCC 334 / BCRC 17002 / CCUG 31169 / CIP 107868 / KCTC 3260 / NRRL B-441) (Lactobacillus paracasei).